The primary structure comprises 278 residues: Ribosomal protein L11 methyltransferase (278 aa).

S-adenosyl-L-methionine contacts are provided by threonine 131, glycine 152, aspartate 173, and asparagine 214.

The protein belongs to the methyltransferase superfamily. PrmA family.

It localises to the cytoplasm. It catalyses the reaction L-lysyl-[protein] + 3 S-adenosyl-L-methionine = N(6),N(6),N(6)-trimethyl-L-lysyl-[protein] + 3 S-adenosyl-L-homocysteine + 3 H(+). In terms of biological role, methylates ribosomal protein L11. The protein is Ribosomal protein L11 methyltransferase of Campylobacter lari (strain RM2100 / D67 / ATCC BAA-1060).